Reading from the N-terminus, the 336-residue chain is Transmembrane protein 19 (336 aa).

Transmembrane regions (helical) follow at residues 15–35, 49–69, 84–104, 218–238, 257–277, and 313–333; these read MITN…FWII, ISPW…SNGL, VVGF…LMFF, VTVV…IAYF, IIAF…YLGA, and VNLF…WGFW.

This sequence belongs to the TMEM19 family.

It localises to the membrane. The chain is Transmembrane protein 19 (TMEM19) from Homo sapiens (Human).